A 449-amino-acid chain; its full sequence is MQRVAVMVLAVLLALFSAPPAWAIDPPVIDAGAVPPDETGPDQPTEQRKICATPTVMPNSNFADRPWANDYLRIQEAQKFATGAGVTVAVIDTGVNGSPRVPAEPGGDFVDAAGNGMSDCDAHGTMTAAIIGGRPSPTDGFVGMAPDVRLLSLRQTSVAFQPKGARQDPNDPNTTQTAGSIRSLARSVVHAANLGAQVINISEAACYKVTRRIDETSLGAAINYAVNVKGAVIVVAAGNTGQDCSQNPPPDPSVPSDPRGWREVQTIVSPAWYDPLVLTVGSIGQNGQPSNFSMSGPWVGAAAPGENLTSLGYDGQPVNATPGEDGPVPLNGTSFSAAYVSGLAALVKQRFPDLTPAQIINRITATARHPGGGVDNYVGAGVIDPVAALTWEIPDGPEKAPFRVKEVPPPVYIPPPDRGPITAVVIAGATLAFALGIGALARRALRRKQ.

Positions 1-23 (MQRVAVMVLAVLLALFSAPPAWA) are cleaved as a signal peptide. A disulfide bond links Cys-51 and Cys-120. Residues 66–389 (PWANDYLRIQ…AGVIDPVAAL (324 aa)) enclose the Peptidase S8 domain. Catalysis depends on charge relay system residues Asp-92 and His-123. Disordered regions lie at residues 160–179 (FQPKGARQDPNDPNTTQTAG) and 240–259 (TGQDCSQNPPPDPSVPSDPR). A compositionally biased stretch (polar residues) spans 170-179 (NDPNTTQTAG). A disulfide bond links Cys-206 and Cys-244. The active-site Charge relay system is Ser-334. A helical transmembrane segment spans residues 421–441 (ITAVVIAGATLAFALGIGALA).

The protein belongs to the peptidase S8 family.

The protein localises to the cell membrane. In terms of biological role, may play a dual role in regulation of ESX-1 secretion and virulence. Acts as a protease that cleaves EspB. The chain is Mycosin-1 from Mycolicibacterium smegmatis (strain ATCC 700084 / mc(2)155) (Mycobacterium smegmatis).